The primary structure comprises 155 residues: SsrA-binding protein (155 aa).

It belongs to the SmpB family.

The protein resides in the cytoplasm. Required for rescue of stalled ribosomes mediated by trans-translation. Binds to transfer-messenger RNA (tmRNA), required for stable association of tmRNA with ribosomes. tmRNA and SmpB together mimic tRNA shape, replacing the anticodon stem-loop with SmpB. tmRNA is encoded by the ssrA gene; the 2 termini fold to resemble tRNA(Ala) and it encodes a 'tag peptide', a short internal open reading frame. During trans-translation Ala-aminoacylated tmRNA acts like a tRNA, entering the A-site of stalled ribosomes, displacing the stalled mRNA. The ribosome then switches to translate the ORF on the tmRNA; the nascent peptide is terminated with the 'tag peptide' encoded by the tmRNA and targeted for degradation. The ribosome is freed to recommence translation, which seems to be the essential function of trans-translation. The chain is SsrA-binding protein from Bacillus cytotoxicus (strain DSM 22905 / CIP 110041 / 391-98 / NVH 391-98).